Consider the following 223-residue polypeptide: Transcription factor bHLH75 (223 aa).

The segment at 58-100 (FPNLLHGNTRRKGNKEESGSKRRRKRSEEEEAMNGDETQKPKD) is disordered. The bHLH domain occupies 110 to 160 (QATDSHSLAERVRREKINERLKCLQDLVPGCYKAMGMAVMLDVIIDYVRSL).

In terms of assembly, homodimer. Expressed in leaves, stems, and flowers.

It is found in the nucleus. The protein is Transcription factor bHLH75 (BHLH75) of Arabidopsis thaliana (Mouse-ear cress).